The chain runs to 302 residues: Enoyl-CoA delta isomerase 1, mitochondrial (302 aa).

Residues 1–41 (MALVASVRVPARVLLRAGARLPGAALGRTERAAGGGDGARR) constitute a mitochondrion transit peptide. Lysine 61 is modified (N6-acetyllysine; alternate). Lysine 61 is subject to N6-succinyllysine; alternate. Lysine 84 is subject to N6-succinyllysine. At lysine 89 the chain carries N6-acetyllysine. Substrate contacts are provided by residues 106–110 (AGLDL), glycine 153, and asparagine 177. Lysine 283 is subject to N6-acetyllysine; alternate. Position 283 is an N6-succinyllysine; alternate (lysine 283). Lysine 288 is modified (N6-succinyllysine).

It belongs to the enoyl-CoA hydratase/isomerase family. Homotrimer. Expressed in liver (at protein level).

It localises to the mitochondrion matrix. It catalyses the reaction a (3Z)-enoyl-CoA = a 4-saturated (2E)-enoyl-CoA. It carries out the reaction a (3E)-enoyl-CoA = a 4-saturated (2E)-enoyl-CoA. The catalysed reaction is (3Z)-octenoyl-CoA = (2E)-octenoyl-CoA. The enzyme catalyses (2E)-tetradecenoyl-CoA = (3Z)-tetradecenoyl-CoA. It catalyses the reaction (3Z)-dodecenoyl-CoA = (2E)-dodecenoyl-CoA. It carries out the reaction (3Z)-hexenoyl-CoA = (2E)-hexenoyl-CoA. The catalysed reaction is (3Z)-decenoyl-CoA = (2E)-decenoyl-CoA. Its pathway is lipid metabolism; fatty acid beta-oxidation. Functionally, key enzyme of fatty acid beta-oxidation. Able to isomerize both 3-cis (3Z) and 3-trans (3E) double bonds into the 2-trans (2E) form in a range of enoyl-CoA species, with a preference for (3Z)-enoyl-CoAs over (3E)-enoyl-CoAs. The catalytic efficiency of this enzyme is not affected by the fatty acyl chain length. The chain is Enoyl-CoA delta isomerase 1, mitochondrial (ECI1) from Homo sapiens (Human).